A 546-amino-acid chain; its full sequence is Chaperonin GroEL (546 aa).

Residues 29–32 (TMGP), lysine 50, 86–90 (DGTTT), glycine 414, and aspartate 492 contribute to the ATP site.

The protein belongs to the chaperonin (HSP60) family. Forms a cylinder of 14 subunits composed of two heptameric rings stacked back-to-back. Interacts with the co-chaperonin GroES.

It is found in the cytoplasm. The enzyme catalyses ATP + H2O + a folded polypeptide = ADP + phosphate + an unfolded polypeptide.. Its function is as follows. Together with its co-chaperonin GroES, plays an essential role in assisting protein folding. The GroEL-GroES system forms a nano-cage that allows encapsulation of the non-native substrate proteins and provides a physical environment optimized to promote and accelerate protein folding. In Helicobacter pylori (strain P12), this protein is Chaperonin GroEL.